The primary structure comprises 78 residues: Large ribosomal subunit protein bL28 (78 aa).

Residues Met-1–His-20 are disordered.

The protein belongs to the bacterial ribosomal protein bL28 family.

The polypeptide is Large ribosomal subunit protein bL28 (Photobacterium profundum (strain SS9)).